Here is a 489-residue protein sequence, read N- to C-terminus: Bridging integrator 2 (489 aa).

The 217-residue stretch at 28–244 (VLQKLGKTVE…MSKLEKQHSN (217 aa)) folds into the BAR domain. Residues 267-302 (QSCAASSPVSPVSPVSPVTSPTSPSATSEPESVSAT) show a composition bias toward low complexity. Residues 267 to 489 (QSCAASSPVS…ASGGLVGLFL (223 aa)) form a disordered region. S273 carries the post-translational modification Phosphoserine. Acidic residues predominate over residues 311 to 331 (GGEDSCESQESLKDEEADEAQ). The residue at position 357 (S357) is a Phosphoserine. The segment covering 358 to 368 (QEEALSSSAQS) has biased composition (low complexity). Phosphoserine is present on residues S380, S392, S420, S422, S424, S430, S435, S439, and S443.

In terms of assembly, homodimer. Interacts with BIN1. Interacts with ARHGEF6 (via SH3 domain), ARHGEF7 (via SH3 domain), SH3GL1, SH3GL2 and SH3GL3. Identified in a complex with ARHGEF6 and GIT2.

Its subcellular location is the cytoplasm. It is found in the cell projection. The protein localises to the podosome membrane. The protein resides in the cell cortex. It localises to the phagocytic cup. Functionally, promotes cell motility and migration, probably via its interaction with the cell membrane and with podosome proteins that mediate interaction with the cytoskeleton. Modulates membrane curvature and mediates membrane tubulation. Inhibits phagocytosis. Plays a role in podosome formation. In Mus musculus (Mouse), this protein is Bridging integrator 2 (Bin2).